We begin with the raw amino-acid sequence, 63 residues long: Large ribosomal subunit protein uL29 (63 aa).

Belongs to the universal ribosomal protein uL29 family.

The protein is Large ribosomal subunit protein uL29 of Glaesserella parasuis serovar 5 (strain SH0165) (Haemophilus parasuis).